A 135-amino-acid polypeptide reads, in one-letter code: Class I hydrophobin dewA (135 aa).

A signal peptide spans 1-18; the sequence is MRFIVSLLAFTAAATATA. Intrachain disulfides connect cysteine 44/cysteine 114, cysteine 51/cysteine 108, cysteine 52/cysteine 84, and cysteine 115/cysteine 122. The N-linked (GlcNAc...) asparagine glycan is linked to asparagine 60.

This sequence belongs to the fungal hydrophobin family. As to quaternary structure, forms homodimers at high concentrations, and these dimers are off-pathway to rodlet formation. Dissociation of the dimers into monomers, with resultant exposure of the hydrophobic face, is necessary for self-assembly to form functional amyloid fibrils called rodlets. Self-assembly into fibrillar rodlets occurs spontaneously at hydrophobic:hydrophilic interfaces and the rodlets further associate laterally to form amphipathic monolayers.

It is found in the secreted. It localises to the spore wall. Functionally, aerial growth, conidiation, and dispersal of filamentous fungi in the environment rely upon a capability of their secreting small amphipathic proteins called hydrophobins (HPBs) with low sequence identity. Class I can self-assemble into an outermost layer of rodlet bundles on aerial cell surfaces, conferring cellular hydrophobicity that supports fungal growth, development and dispersal; whereas Class II form highly ordered films at water-air interfaces through intermolecular interactions but contribute nothing to the rodlet structure. DewA is a class I hydrophobin that contributes to spore wall hydrophobicity. This chain is Class I hydrophobin dewA, found in Emericella nidulans (strain FGSC A4 / ATCC 38163 / CBS 112.46 / NRRL 194 / M139) (Aspergillus nidulans).